The sequence spans 202 residues: Matrix protein (202 aa).

The short motif at 35 to 38 (PPEY) is the PPXY motif element. Residues 115–151 (KLRRTLIFQWAESHGPLEGEELEYSQEITWDDEAEFV) form an essential for glycoprotein binding region.

Belongs to the lyssavirus matrix protein family. In terms of assembly, homomultimer. Interacts with nucleoprotein and with the cytoplasmic domain of glycoprotein.

Its subcellular location is the virion membrane. The protein localises to the host endomembrane system. Plays a major role in assembly and budding of virion. Completely covers the ribonucleoprotein coil and keep it in condensed bullet-shaped form. Inhibits viral transcription and stimulates replication. Plays a major role in early induction of TRAIL-mediated apoptosis in infected neurons. The chain is Matrix protein (M) from Mokola virus (MOKV).